A 337-amino-acid polypeptide reads, in one-letter code: Oligopeptide transport ATP-binding protein OppD (337 aa).

The region spanning 20–269 (LNVKDLRVTF…PVHPYSIGLL (250 aa)) is the ABC transporter domain. 56-63 (GESGSGKS) contributes to the ATP binding site.

This sequence belongs to the ABC transporter superfamily. In terms of assembly, the complex is composed of two ATP-binding proteins (OppD and OppF), two transmembrane proteins (OppB and OppC) and a solute-binding protein (OppA or MppA).

It localises to the cell inner membrane. It carries out the reaction a [peptide](out) + ATP + H2O = a [peptide](in) + ADP + phosphate + H(+). The catalysed reaction is L-alanyl-gamma-D-glutamyl-meso-2,6-diaminopimelate(out) + ATP + H2O = L-alanyl-gamma-D-glutamyl-meso-2,6-diaminopimelate(in) + ADP + phosphate + H(+). Its function is as follows. Part of the ABC transporter complex OppABCDF involved in the uptake of oligopeptides and of the ABC transporter complex MppA-OppBCDF involved in the uptake of the cell wall murein tripeptide L-alanyl-gamma-D-glutamyl-meso-diaminopimelate. Probably responsible for energy coupling to the transport system. Plays an important nutritional role and is involved in the recycling of cell wall peptides. The polypeptide is Oligopeptide transport ATP-binding protein OppD (oppD) (Escherichia coli (strain K12)).